Consider the following 209-residue polypeptide: Chaperone protein TorD (209 aa).

This sequence belongs to the TorD/DmsD family. TorD subfamily.

It is found in the cytoplasm. Functionally, involved in the biogenesis of TorA. Acts on TorA before the insertion of the molybdenum cofactor and, as a result, probably favors a conformation of the apoenzyme that is competent for acquiring the cofactor. The polypeptide is Chaperone protein TorD (Shewanella baltica (strain OS185)).